A 558-amino-acid polypeptide reads, in one-letter code: Cytochrome c oxidase subunit 1-beta (558 aa).

Over 1–28 (MADAAVHGHGDHHDTRGFFTRWFMSTNH) the chain is Cytoplasmic. Residues 29–59 (KDIGILYLFTAGIVGLISVCFTVYMRMELQH) form a helical membrane-spanning segment. The Periplasmic portion of the chain corresponds to 60–82 (PGVQYMCLEGARLIADASAECTP). Residues cysteine 66 and cysteine 80 are joined by a disulfide bond. The chain crosses the membrane as a helical span at residues 83-120 (NGHLWNVMITYHGVLMMFFVVIPALFGGFGNYFMPLHI). Histidine 94 contacts Fe(II)-heme a. The Cytoplasmic portion of the chain corresponds to 121 to 126 (GAPDMA). Residues 127-151 (FPRLNNLSYWMYVCGVALGVASLLA) form a helical membrane-spanning segment. The Periplasmic segment spans residues 152 to 176 (PGGNDQMGSGVGWVLYPPLSTTEAG). The helical transmembrane segment at 177–206 (YSMDLAIFAVHVSGASSILGAINIITTFLN) threads the bilayer. Residues 207-217 (MRAPGMTLFKV) are Cytoplasmic-facing. The chain crosses the membrane as a helical span at residues 218 to 251 (PLFAWSVFITAWLILLSLPVLAGAITMLLMDRNF). Residues 252–262 (GTQFFDPAGGG) lie on the Periplasmic side of the membrane. A helical membrane pass occupies residues 263 to 299 (DPVLYQHILWFFGHPEVYIIILPGFGIISHVISTFAK). Cu cation-binding residues include histidine 276 and tyrosine 280. A cross-link (1'-histidyl-3'-tyrosine (His-Tyr)) is located at residues 276 to 280 (HPEVY). Topologically, residues 300–303 (KPIF) are cytoplasmic. The helical transmembrane segment at 304 to 331 (GYLPMVLAMAAIGILGFVVWAHHMYTAG) threads the bilayer. Residues histidine 325 and histidine 326 each coordinate Cu cation. Position 332 (methionine 332) is a topological domain, periplasmic. The chain crosses the membrane as a helical span at residues 333–364 (SLTQQAYFMLATMTIAVPTGIKVFSWIATMWG). Residues 365–369 (GSIEF) lie on the Cytoplasmic side of the membrane. The helical transmembrane segment at 370–395 (KTPMLWAFGFLFLFTVGGVTGVVLSQ) threads the bilayer. The Periplasmic portion of the chain corresponds to 396–404 (APLDRVYHD). A helical membrane pass occupies residues 405-437 (TYYVVAHFHYVMSLGAVFGIFAGVYYWIGKMSG). Histidine 411 provides a ligand contact to heme a3. A Fe(II)-heme a-binding site is contributed by histidine 413. The Cytoplasmic portion of the chain corresponds to 438–440 (RQY). Residues 441 to 469 (PEWAGQLHFWMMFIGSNLIFFPQHFLGRQ) form a helical membrane-spanning segment. Residues 470–478 (GMPRRYIDY) are Periplasmic-facing. The helical transmembrane segment at 479-514 (PVEFAYWNNISSIGAYISFASFLFFIGIVFYTLFAG) threads the bilayer. The Cytoplasmic portion of the chain corresponds to 515–558 (KRVNVPNYWNEHADTLEWTLPSPPPEHTFETLPKREDWDRAHAH).

The protein belongs to the heme-copper respiratory oxidase family. Requires Cu(2+) as cofactor. Heme is required as a cofactor. In terms of processing, his-276 and Tyr-280 are involved in the formation of a copper-coordinated covalent cross-link at the active site of the catalytic subunit I.

The protein localises to the cell inner membrane. The enzyme catalyses 4 Fe(II)-[cytochrome c] + O2 + 8 H(+)(in) = 4 Fe(III)-[cytochrome c] + 2 H2O + 4 H(+)(out). It functions in the pathway energy metabolism; oxidative phosphorylation. Functionally, subunit I and II form the functional core of the enzyme complex. Electrons originating in cytochrome c are transferred via heme a and Cu(A) to the binuclear center formed by heme a3 and Cu(B). This cytochrome c oxidase shows proton pump activity across the membrane in addition to the electron transfer. This is Cytochrome c oxidase subunit 1-beta (ctaDII) from Paracoccus denitrificans.